A 350-amino-acid polypeptide reads, in one-letter code: Small ribosomal subunit biogenesis GTPase RsgA (350 aa).

The tract at residues 1 to 30 is disordered; sequence MSKRKLTQNQQRRIQSNNAKTLHRHQHRHK. Polar residues predominate over residues 7-20; it reads TQNQQRRIQSNNAK. Residues 21–30 are compositionally biased toward basic residues; the sequence is TLHRHQHRHK. Residues 106-274 form the CP-type G domain; the sequence is HNQIVRPDYY…LIDSPGIREF (169 aa). GTP contacts are provided by residues 162–165 and 216–224; these read NKAD and GQSGVGKSS. Residues cysteine 298, cysteine 303, histidine 305, and cysteine 311 each contribute to the Zn(2+) site.

It belongs to the TRAFAC class YlqF/YawG GTPase family. RsgA subfamily. Monomer. Associates with 30S ribosomal subunit, binds 16S rRNA. It depends on Zn(2+) as a cofactor.

The protein localises to the cytoplasm. Functionally, one of several proteins that assist in the late maturation steps of the functional core of the 30S ribosomal subunit. Helps release RbfA from mature subunits. May play a role in the assembly of ribosomal proteins into the subunit. Circularly permuted GTPase that catalyzes slow GTP hydrolysis, GTPase activity is stimulated by the 30S ribosomal subunit. This chain is Small ribosomal subunit biogenesis GTPase RsgA, found in Histophilus somni (strain 2336) (Haemophilus somnus).